The sequence spans 223 residues: GTP-binding nuclear protein Ran (223 aa).

The Small GTPase Ran-type domain occupies 8-172 (VVAEFKLVLV…LWILRKLTGD (165 aa)). 19–26 (DGGVGKTT) provides a ligand contact to GTP. The interval 38 to 46 (KRYIATQGV) is switch-I. GTP contacts are provided by residues Gly69, 123 to 126 (NKVD), and 151 to 153 (SAK). The tract at residues 69–85 (GQEKLGGLREGYYIGAD) is switch-II.

It belongs to the small GTPase superfamily. Ran family. In terms of assembly, monomer. Found in a nuclear export complex with RanGTP, exportin and pre-miRNA.

Its subcellular location is the nucleus. Functionally, GTP-binding protein involved in nucleocytoplasmic transport. Required for the import of protein into the nucleus and also for RNA export. Involved in chromatin condensation and control of cell cycle. The sequence is that of GTP-binding nuclear protein Ran from Tetrahymena pyriformis.